Consider the following 443-residue polypeptide: NADH-quinone oxidoreductase subunit D 1 (443 aa).

The protein belongs to the complex I 49 kDa subunit family. NDH-1 is composed of 14 different subunits. Subunits NuoB, C, D, E, F, and G constitute the peripheral sector of the complex.

It localises to the cell membrane. It carries out the reaction a quinone + NADH + 5 H(+)(in) = a quinol + NAD(+) + 4 H(+)(out). In terms of biological role, NDH-1 shuttles electrons from NADH, via FMN and iron-sulfur (Fe-S) centers, to quinones in the respiratory chain. The immediate electron acceptor for the enzyme in this species is believed to be a menaquinone. Couples the redox reaction to proton translocation (for every two electrons transferred, four hydrogen ions are translocated across the cytoplasmic membrane), and thus conserves the redox energy in a proton gradient. This chain is NADH-quinone oxidoreductase subunit D 1, found in Streptomyces avermitilis (strain ATCC 31267 / DSM 46492 / JCM 5070 / NBRC 14893 / NCIMB 12804 / NRRL 8165 / MA-4680).